The sequence spans 276 residues: Kallikrein-11 (276 aa).

An N-terminal signal peptide occupies residues 1–44 (MRRLKSDWKLSTETREPGARPALLQARMILRLIALALVTGHVGG). The propeptide at 45 to 47 (ETR) is activation peptide. The Peptidase S1 domain occupies 48-274 (IIKGYECRPH…YFNWIHEVMR (227 aa)). 5 disulfides stabilise this stretch: cysteine 54-cysteine 189, cysteine 73-cysteine 89, cysteine 168-cysteine 235, cysteine 200-cysteine 214, and cysteine 225-cysteine 250. Histidine 88 serves as the catalytic Charge relay system. Asparagine 125 carries an N-linked (GlcNAc...) asparagine glycan. The active-site Charge relay system is the aspartate 136. N-linked (GlcNAc...) asparagine glycosylation is found at asparagine 191 and asparagine 207. Serine 229 (charge relay system) is an active-site residue. A glycan (N-linked (GlcNAc...) asparagine) is linked at asparagine 236.

Belongs to the peptidase S1 family. Kallikrein subfamily. As to expression, expressed in brain and prostate (isoform 1) and prostate (isoform 2).

It localises to the secreted. Possible multifunctional protease. Efficiently cleaves 'bz-Phe-Arg-4-methylcoumaryl-7-amide', a kallikrein substrate, and weakly cleaves other substrates for kallikrein and trypsin. This chain is Kallikrein-11 (Klk11), found in Mus musculus (Mouse).